Consider the following 176-residue polypeptide: Peptide deformylase (176 aa).

Fe cation-binding residues include C100 and H142. E143 is an active-site residue. Position 146 (H146) interacts with Fe cation.

This sequence belongs to the polypeptide deformylase family. It depends on Fe(2+) as a cofactor.

It carries out the reaction N-terminal N-formyl-L-methionyl-[peptide] + H2O = N-terminal L-methionyl-[peptide] + formate. Functionally, removes the formyl group from the N-terminal Met of newly synthesized proteins. Requires at least a dipeptide for an efficient rate of reaction. N-terminal L-methionine is a prerequisite for activity but the enzyme has broad specificity at other positions. The protein is Peptide deformylase of Elusimicrobium minutum (strain Pei191).